The sequence spans 437 residues: Proline--tRNA ligase (437 aa).

It belongs to the class-II aminoacyl-tRNA synthetase family. ProS type 2 subfamily. As to quaternary structure, homodimer.

The protein localises to the cytoplasm. It catalyses the reaction tRNA(Pro) + L-proline + ATP = L-prolyl-tRNA(Pro) + AMP + diphosphate. Functionally, catalyzes the attachment of proline to tRNA(Pro) in a two-step reaction: proline is first activated by ATP to form Pro-AMP and then transferred to the acceptor end of tRNA(Pro). The polypeptide is Proline--tRNA ligase (Rhizorhabdus wittichii (strain DSM 6014 / CCUG 31198 / JCM 15750 / NBRC 105917 / EY 4224 / RW1) (Sphingomonas wittichii)).